Reading from the N-terminus, the 615-residue chain is uncharacterized protein (615 aa).

The protein belongs to the NodU/CmcH family.

This is an uncharacterized protein from Synechocystis sp. (strain ATCC 27184 / PCC 6803 / Kazusa).